A 389-amino-acid polypeptide reads, in one-letter code: Trans-2-enoyl-CoA reductase [NADH] (389 aa).

Residues 47–52, 73–74, 110–111, and 138–139 contribute to the NAD(+) site; these read GASTGY, FE, DA, and LA. Y224 provides a ligand contact to substrate. Residue Y234 is the Proton donor of the active site. NAD(+) is bound by residues K243 and 272–274; that span reads LVT.

This sequence belongs to the TER reductase family. As to quaternary structure, monomer.

The enzyme catalyses a 2,3-saturated acyl-CoA + NAD(+) = a (2E)-enoyl-CoA + NADH + H(+). It participates in lipid metabolism; fatty acid biosynthesis. Involved in the fatty acid synthesis (FAS II). Catalyzes the reduction of a carbon-carbon double bond in an enoyl moiety that is covalently linked to a coenzyme A (CoA). This is Trans-2-enoyl-CoA reductase [NADH] from Clostridium perfringens (strain ATCC 13124 / DSM 756 / JCM 1290 / NCIMB 6125 / NCTC 8237 / Type A).